A 312-amino-acid polypeptide reads, in one-letter code: Coproporphyrin III ferrochelatase (312 aa).

Residues Y13, R30, 46 to 47, S54, and Y125 each bind Fe-coproporphyrin III; that span reads RY. Positions 183 and 264 each coordinate Fe(2+).

Belongs to the ferrochelatase family.

It localises to the cytoplasm. It carries out the reaction Fe-coproporphyrin III + 2 H(+) = coproporphyrin III + Fe(2+). Its pathway is porphyrin-containing compound metabolism; protoheme biosynthesis. In terms of biological role, involved in coproporphyrin-dependent heme b biosynthesis. Catalyzes the insertion of ferrous iron into coproporphyrin III to form Fe-coproporphyrin III. This chain is Coproporphyrin III ferrochelatase, found in Bacillus pumilus (strain SAFR-032).